A 1223-amino-acid polypeptide reads, in one-letter code: RNA-binding protein 20 (1223 aa).

3 disordered regions span residues 1 to 59, 238 to 288, and 306 to 381; these read MVLA…QAGL, QAYG…PTSQ, and GEVG…GARR. A compositionally biased stretch (pro residues) spans 29 to 57; that stretch reads APAPPAPPGPRGMQPPPPPPPPPPPPPQA. 2 stretches are compositionally biased toward polar residues: residues 238–261 and 314–331; these read QAYG…SGSV and GPNS…QSKP. A U1-type zinc finger spans residues 410-444; the sequence is HLPHICSICDKKVFDLKDWELHVKGKLHAQKCLLF. The RRM domain maps to 520–595; sequence RVVHICNLPE…EKLLIRMSKR (76 aa). A compositionally biased stretch (basic and acidic residues) spans 626 to 636; the sequence is EADRYGPERPR. Disordered regions lie at residues 626–902, 971–995, and 1042–1102; these read EADR…TNME, EISL…DVEM, and MSSP…STQE. The tract at residues 630–657 is RS; sequence YGPERPRSRSPVSRSLSPRSHTPSFTSC. Ser637, Ser639, Ser642, Ser644, Ser662, and Ser681 each carry phosphoserine. Residues 638–662 show a composition bias toward low complexity; the sequence is RSPVSRSLSPRSHTPSFTSCSSSHS. Composition is skewed to basic and acidic residues over residues 676-711 and 718-737; these read DSWE…MWAH and RQVD…GYRE. Residues 742-752 are compositionally biased toward low complexity; it reads SGSPSSLHSVS. A Phosphoserine modification is found at Ser744. Composition is skewed to basic and acidic residues over residues 755-774 and 786-852; these read KSRE…DKYL and RKDE…KEEQ. 8 positions are modified to phosphoserine: Ser803, Ser861, Ser872, Ser887, Ser889, Ser973, Ser976, and Ser1044. Positions 864-884 are enriched in basic and acidic residues; that stretch reads RQEKETESSDAENTRTRKEQD. The segment covering 1083–1102 has biased composition (polar residues); that stretch reads STPTETDLQSQACQGVSTQE. A phosphoserine mark is found at Ser1111 and Ser1116. Residues 1157–1188 form a Matrin-type zinc finger; sequence FYCKLCGLFYTSEEMAKMSHCRSAVHYRNLQK. A disordered region spans residues 1197-1223; it reads GLKETEGAGSPRPEDSGIVPHFERKKL. A Phosphoserine modification is found at Ser1206.

In terms of assembly, associates with components of the U1 and U2 U1 small nuclear ribonucleoprotein complexes. In terms of processing, phosphorylation regulates the subcellular localization. Phosphorylation of Ser-637 and Ser-639 in the RS (arginine/serine-rich) region promotes nuclear localization of the protein. In contrast, phosphorylation of the C-terminal disordered region promotes localization to cytoplasmic ribonucleoprotein granules.

The protein localises to the nucleus. Its subcellular location is the cytoplasm. The protein resides in the cytoplasmic ribonucleoprotein granule. In terms of biological role, RNA-binding protein that acts as a regulator of mRNA splicing of a subset of genes encoding key structural proteins involved in cardiac development, such as TTN (Titin), CACNA1C, CAMK2D or PDLIM5/ENH. Acts as a repressor of mRNA splicing: specifically binds the 5'UCUU-3' motif that is predominantly found within intronic sequences of pre-mRNAs, leading to the exclusion of specific exons in target transcripts. RBM20-mediated exon skipping is hormone-dependent and is essential for TTN isoform transition in both cardiac and skeletal muscles. RBM20-mediated exon skipping of TTN provides substrates for the formation of circular RNA (circRNAs) from the TTN transcripts. Together with RBM24, promotes the expression of short isoforms of PDLIM5/ENH in cardiomyocytes. The chain is RNA-binding protein 20 from Sus scrofa (Pig).